Reading from the N-terminus, the 315-residue chain is Calumenin (315 aa).

The first 19 residues, 1 to 19, serve as a signal peptide directing secretion; sequence MNKRPLLLCLGLWVACTLS. EF-hand domains are found at residues 68–103, 104–139, 151–186, 188–223, 229–264, and 265–300; these read ESKERLGMIVGKIDLDNDGYVTEGELTAWIKKAQKK, YVYDNVERQWQEFDLSQDGLVSWDEYRNVTYGTYLD, QMMIRDERRFKMADKDGDLVATKEEFTAFLHPEEFD, MKDIVVLETMEDIDKNGDGLIDLEEYIGDMYNHDGD, WVKTEREQFMEFRDKNHDGKMDKEETKDWILPSDYD, and HSEAESRHLVYESDHNQDGKLTREEIVDKYDLFVGS. Residues Asp-81, Asp-83, Asp-85, Tyr-87, Glu-92, Asp-117, Ser-119, Asp-121, and Glu-128 each contribute to the Ca(2+) site. N-linked (GlcNAc...) asparagine glycosylation occurs at Asn-131. Positions 164, 166, 168, 175, 201, 203, 205, 212, 242, 244, 246, 248, 253, 278, 280, 282, 284, and 289 each coordinate Ca(2+). A Prevents secretion from ER motif is present at residues 312-315; it reads HDEF.

This sequence belongs to the CREC family. In terms of assembly, interacts with ggcx.

Its subcellular location is the endoplasmic reticulum membrane. The protein localises to the golgi apparatus. The protein resides in the secreted. It is found in the melanosome. It localises to the sarcoplasmic reticulum lumen. In terms of biological role, involved in regulation of vitamin K-dependent carboxylation of multiple N-terminal glutamate residues. Seems to inhibit gamma-carboxylase ggcx. Binds 7 calcium ions with a low affinity. In Xenopus laevis (African clawed frog), this protein is Calumenin (calu).